The chain runs to 209 residues: CMRF35-like molecule 7 (209 aa).

An N-terminal signal peptide occupies residues 1–17; that stretch reads MWLSPALLLLSFPGCLS. The Ig-like V-type domain maps to 18–120; that stretch reads IQGPALVRGP…TDRGTRVKVN (103 aa). Residues 18–157 lie on the Extracellular side of the membrane; that stretch reads IQGPALVRGP…SSDLQKRTYY (140 aa). Cysteine 36 and cysteine 104 are disulfide-bonded. N-linked (GlcNAc...) asparagine glycosylation occurs at asparagine 97. A helical membrane pass occupies residues 158–178; the sequence is MLLVFVKVPALLILVGAVLWL. Residues 179–209 lie on the Cytoplasmic side of the membrane; that stretch reads KRSTQKVPEEQWRHTLCSDLDSELLAKDISP. The residue at position 196 (serine 196) is a Phosphoserine.

The protein belongs to the CD300 family. Interacts with TYROBP, which enhances cell surface expression and activation properties. May interact with HCST. N-glycosylated. As to expression, expressed in myeloid cells (at protein level).

The protein localises to the cell membrane. Functionally, acts as an activating immune receptor in mast cells through its interaction with ITAM-bearing adapter TYROBP. The polypeptide is CMRF35-like molecule 7 (Cd300lb) (Mus musculus (Mouse)).